The primary structure comprises 109 residues: Small ribosomal subunit protein bS6 (109 aa).

Belongs to the bacterial ribosomal protein bS6 family.

Functionally, binds together with bS18 to 16S ribosomal RNA. In Dehalococcoides mccartyi (strain CBDB1), this protein is Small ribosomal subunit protein bS6.